A 146-amino-acid chain; its full sequence is Hemoglobin subunit beta (146 aa).

V1 is subject to N-acetylvaline. Residues 2–146 (HLTPEEKTAV…VANALAHKYH (145 aa)) enclose the Globin domain. T12 carries the post-translational modification Phosphothreonine. Phosphoserine is present on S44. K59 is subject to N6-acetyllysine. H63 is a binding site for heme b. Residue K82 is modified to N6-acetyllysine. Residue H92 coordinates heme b. S-nitrosocysteine is present on C93. N6-acetyllysine is present on K144.

This sequence belongs to the globin family. In terms of assembly, heterotetramer of two alpha chains and two beta chains. Red blood cells.

Its function is as follows. Involved in oxygen transport from the lung to the various peripheral tissues. This is Hemoglobin subunit beta (HBB) from Mandrillus sphinx (Mandrill).